Consider the following 874-residue polypeptide: Alanine--tRNA ligase (874 aa).

Zn(2+) is bound by residues histidine 564, histidine 568, cysteine 665, and histidine 669.

It belongs to the class-II aminoacyl-tRNA synthetase family. Zn(2+) serves as cofactor.

It is found in the cytoplasm. The enzyme catalyses tRNA(Ala) + L-alanine + ATP = L-alanyl-tRNA(Ala) + AMP + diphosphate. Functionally, catalyzes the attachment of alanine to tRNA(Ala) in a two-step reaction: alanine is first activated by ATP to form Ala-AMP and then transferred to the acceptor end of tRNA(Ala). Also edits incorrectly charged Ser-tRNA(Ala) and Gly-tRNA(Ala) via its editing domain. The polypeptide is Alanine--tRNA ligase (Burkholderia mallei (strain ATCC 23344)).